Consider the following 450-residue polypeptide: Zinc finger protein 277 (450 aa).

A2 is modified (N-acetylalanine). 2 consecutive C2H2-type zinc fingers follow at residues 224–248 (LQCL…KKQH) and 355–381 (HQCR…ETKH).

This sequence belongs to the ZNF277 family. As to quaternary structure, interacts (via zinc-finger domains) with RPS2/40S ribosomal protein S2, perhaps as nascent RPS2 is synthesized during translation; the interaction is direct; the interaction is extra-ribosomal. Interaction with RPS2 competes with the binding of RPS2 to protein arginine methyltransferase PRMT3. Interacts with Polycomb group (PcG) complex protein BMI1. May be part of a complex including at least ZNF277, BMI1 and RNF2/RING2.

The protein localises to the nucleus. Functionally, probable transcription factor. Involved in modulation of cellular senescence; represses transcription of the tumor suppressor gene INK4A/ARF, perhaps acting via the Polycomb group (PcG) complex PRC1. The sequence is that of Zinc finger protein 277 (ZNF277) from Homo sapiens (Human).